The chain runs to 476 residues: Glycogen synthase (476 aa).

Lys15 is a binding site for ADP-alpha-D-glucose.

Belongs to the glycosyltransferase 1 family. Bacterial/plant glycogen synthase subfamily.

It carries out the reaction [(1-&gt;4)-alpha-D-glucosyl](n) + ADP-alpha-D-glucose = [(1-&gt;4)-alpha-D-glucosyl](n+1) + ADP + H(+). The protein operates within glycan biosynthesis; glycogen biosynthesis. In terms of biological role, synthesizes alpha-1,4-glucan chains using ADP-glucose. In Bacillus cereus (strain ATCC 10987 / NRS 248), this protein is Glycogen synthase.